The primary structure comprises 265 residues: Zinc transporter ZupT (265 aa).

8 consecutive transmembrane segments (helical) span residues isoleucine 6 to leucine 26, phenylalanine 37 to isoleucine 57, tryptophan 77 to valine 97, glycine 122 to leucine 142, isoleucine 150 to alanine 170, phenylalanine 184 to leucine 204, phenylalanine 208 to isoleucine 228, and cysteine 245 to isoleucine 265. Fe(2+) is bound by residues asparagine 133 and glutamate 136. Positions 136 and 161 each coordinate Zn(2+). 3 residues coordinate Fe(2+): asparagine 162, glutamate 165, and glutamate 194. Glutamate 165 provides a ligand contact to Zn(2+).

Belongs to the ZIP transporter (TC 2.A.5) family. ZupT subfamily.

It localises to the cell membrane. The enzyme catalyses Zn(2+)(in) = Zn(2+)(out). Functionally, mediates zinc uptake. May also transport other divalent cations. This is Zinc transporter ZupT from Corynebacterium aurimucosum (strain ATCC 700975 / DSM 44827 / CIP 107346 / CN-1) (Corynebacterium nigricans).